The chain runs to 153 residues: Regulator of sigma D (153 aa).

It belongs to the Rsd/AlgQ family. In terms of assembly, interacts with RpoD.

It localises to the cytoplasm. Functionally, binds RpoD and negatively regulates RpoD-mediated transcription activation by preventing the interaction between the primary sigma factor RpoD with the catalytic core of the RNA polymerase and with promoter DNA. May be involved in replacement of the RNA polymerase sigma subunit from RpoD to RpoS during the transition from exponential growth to the stationary phase. The protein is Regulator of sigma D of Pectobacterium atrosepticum (strain SCRI 1043 / ATCC BAA-672) (Erwinia carotovora subsp. atroseptica).